The sequence spans 459 residues: Alcohol acyl transferase 1 allele RGc (459 aa).

Active-site proton acceptor residues include His-164 and Asn-385.

It belongs to the plant acyltransferase family. In terms of tissue distribution, expressed at very low levels in the skin of ripe fruit.

Functionally, involved in the biosynthesis of volatile esters which confer ripe apple fruit flavor. Alcohol acyl transferase that can use a wide range of alcohols as substrate to produce esters. The protein is Alcohol acyl transferase 1 allele RGc of Malus domestica (Apple).